The sequence spans 194 residues: Inosine triphosphate pyrophosphatase (194 aa).

An N-acetylalanine modification is found at Ala-2. 14–19 is an ITP binding site; the sequence is TGNAKK. Residue Glu-44 participates in Mg(2+) binding. ITP contacts are provided by residues Lys-56, 72–73, Lys-89, 149–152, Lys-172, and 177–178; these read DT, FGWD, and HR.

Belongs to the HAM1 NTPase family. In terms of assembly, homodimer. It depends on Mg(2+) as a cofactor. In terms of tissue distribution, ubiquitous. Highly expressed in heart, liver, sex glands, thyroid and adrenal gland.

The protein resides in the cytoplasm. The catalysed reaction is ITP + H2O = IMP + diphosphate + H(+). It carries out the reaction dITP + H2O = dIMP + diphosphate + H(+). It catalyses the reaction XTP + H2O = XMP + diphosphate + H(+). The enzyme catalyses N(6)-hydroxy-dATP + H2O = N(6)-hydroxy-dAMP + diphosphate + H(+). Functionally, pyrophosphatase that hydrolyzes the non-canonical purine nucleotides inosine triphosphate (ITP), deoxyinosine triphosphate (dITP) as well as 2'-deoxy-N-6-hydroxylaminopurine triphosphate (dHAPTP) and xanthosine 5'-triphosphate (XTP) to their respective monophosphate derivatives. The enzyme does not distinguish between the deoxy- and ribose forms. Probably excludes non-canonical purines from RNA and DNA precursor pools, thus preventing their incorporation into RNA and DNA and avoiding chromosomal lesions. The protein is Inosine triphosphate pyrophosphatase of Homo sapiens (Human).